The sequence spans 178 residues: Ribosome maturation factor RimM (178 aa).

The PRC barrel domain occupies 100–178 (DEGEFYWHQL…EIRVDWDADF (79 aa)).

It belongs to the RimM family. In terms of assembly, binds ribosomal protein uS19.

The protein resides in the cytoplasm. In terms of biological role, an accessory protein needed during the final step in the assembly of 30S ribosomal subunit, possibly for assembly of the head region. Essential for efficient processing of 16S rRNA. May be needed both before and after RbfA during the maturation of 16S rRNA. It has affinity for free ribosomal 30S subunits but not for 70S ribosomes. The sequence is that of Ribosome maturation factor RimM from Azotobacter vinelandii (strain DJ / ATCC BAA-1303).